The primary structure comprises 829 residues: Telomere length regulation protein TEL2 homolog (829 aa).

2 disordered regions span residues 446-493 (SADF…DDLV) and 620-641 (SEKP…PHSI). Over residues 456–466 (SSPSKSPLSSP) the composition is skewed to low complexity. A compositionally biased stretch (basic and acidic residues) spans 467–480 (EVREKSKVKVKADQ). The span at 482 to 493 (SDSDLDSDDDLV) shows a compositional bias: acidic residues. A compositionally biased stretch (polar residues) spans 629–641 (AESGSVNTDPHSI).

Belongs to the TEL2 family.

The protein resides in the cytoplasm. It localises to the membrane. Its subcellular location is the nucleus. The protein localises to the chromosome. It is found in the telomere. In terms of biological role, regulator of the DNA damage response (DDR). Part of the TTT complex that is required to stabilize protein levels of the phosphatidylinositol 3-kinase-related protein kinase (PIKK) family proteins. Promotes assembly, stabilizes and maintains the activity of TORC complexes, which regulate cell growth and survival in response to nutrient and hormonal signals. May be involved in telomere length regulation. The sequence is that of Telomere length regulation protein TEL2 homolog (telo2) from Xenopus tropicalis (Western clawed frog).